Here is a 727-residue protein sequence, read N- to C-terminus: Platelet endothelial cell adhesion molecule (727 aa).

The first 17 residues, 1–17 (MLLALGLTLVLYASLQA), serve as a signal peptide directing secretion. The Extracellular portion of the chain corresponds to 18 to 590 (EENSFTINSI…VRVFLAPWKK (573 aa)). Ig-like C2-type domains are found at residues 40–126 (GQQL…PKVT), 135–213 (GGVV…PIRS), 225–309 (PKFE…IMVN), 315–391 (PKPK…LVPI), 413–472 (GHAI…NCHS), and 488–578 (PVDE…RSST). Cys47 and Cys99 are oxidised to a cystine. Residues Asn74 and Asn141 are each glycosylated (N-linked (GlcNAc...) asparagine). 2 disulfides stabilise this stretch: Cys142/Cys195 and Cys245/Cys293. 5 N-linked (GlcNAc...) asparagine glycosylation sites follow: Asn309, Asn345, Asn360, Asn424, and Asn540. Disulfide bonds link Cys336–Cys375, Cys420–Cys465, and Cys512–Cys561. A helical transmembrane segment spans residues 591–609 (GLIAVVVIGVVIATLIVAA). Topologically, residues 610–727 (KCYFLRKAKA…SRTEGSLNGT (118 aa)) are cytoplasmic. A lipid anchor (S-palmitoyl cysteine) is attached at Cys611. Residues 642–672 (SEPSVEANSHYGYDDVSGNDAVKPINQNKDP) are disordered. 2 consecutive short sequence motifs (ITIM motif) follow at residues 677 to 682 (VEYTEV) and 700 to 705 (TVYSEI). Residues Tyr679 and Tyr702 each carry the phosphotyrosine; by FER modification. The segment at 698 to 718 (TETVYSEIRKVDPNLMENRYS) is membrane-bound segment which detaches upon phosphorylation. The segment at 710 to 727 (PNLMENRYSRTEGSLNGT) is may play a role in cytoprotective signaling. 2 positions are modified to phosphoserine: Ser718 and Ser723.

Trans-homodimer (via Ig-like C2-type 1 and Ig-like C2-type 2 domains); trans-homodimerization is required for cell-cell interaction. Forms a complex with BDKRB2 and GNAQ. Interacts with BDKRB2 and GNAQ. Interacts with PTPN11; Tyr-702 is critical for PTPN11 recruitment. Interacts with FER. Interacts with CD177; the interaction is Ca(2+)-dependent; the interaction is direct. Post-translationally, phosphorylated on Ser and Tyr residues by src kinases after cellular activation. Upon activation, phosphorylated on Ser-718 which probably initiates the dissociation of the membrane-interaction segment (residues 698-718) from the cell membrane allowing the sequential phosphorylation of Tyr-702 and Tyr-679. Constitutively phosphorylated on Ser-723 in resting platelets. Phosphorylated on tyrosine residues by FER and FES in response to FCER1 activation. In endothelial cells Fyn mediates mechanical-force (stretch or pull) induced tyrosine phosphorylation. Palmitoylation by ZDHHC21 is necessary for cell surface expression in endothelial cells and enrichment in membrane rafts. In terms of tissue distribution, expressed in lung and platelets (at protein level).

The protein resides in the cell membrane. It is found in the membrane raft. Its subcellular location is the cell junction. Cell adhesion molecule which is required for leukocyte transendothelial migration (TEM) under most inflammatory conditions. Tyr-679 plays a critical role in TEM and is required for efficient trafficking of PECAM1 to and from the lateral border recycling compartment (LBRC) and is also essential for the LBRC membrane to be targeted around migrating leukocytes. Trans-homophilic interaction may play a role in endothelial cell-cell adhesion via cell junctions. Heterophilic interaction with CD177 plays a role in transendothelial migration of neutrophils. Homophilic ligation of PECAM1 prevents macrophage-mediated phagocytosis of neighboring viable leukocytes by transmitting a detachment signal. Promotes macrophage-mediated phagocytosis of apoptotic leukocytes by tethering them to the phagocytic cells; PECAM1-mediated detachment signal appears to be disabled in apoptotic leukocytes. Modulates bradykinin receptor BDKRB2 activation. Regulates bradykinin- and hyperosmotic shock-induced ERK1/2 activation in endothelial cells. Induces susceptibility to atherosclerosis. The protein is Platelet endothelial cell adhesion molecule (Pecam1) of Mus musculus (Mouse).